The sequence spans 386 residues: bHLH transcription factor RHL1 (386 aa).

Residues 119–186 are disordered; sequence FTGSLNGTQP…RRGQATDPHS (68 aa). Over residues 127 to 137 the composition is skewed to low complexity; the sequence is QPQQHFQHPPQ. Positions 138 to 151 are enriched in polar residues; the sequence is GNSNQIQGQNFGAT. A basic motif; degenerate region spans residues 180 to 193; it reads QATDPHSIAERLRR. The bHLH domain maps to 180–229; the sequence is QATDPHSIAERLRRERIAERMKALQELVPNANKTDKASMLDEIIDYVKFL. Residues 194–229 form a helix-loop-helix motif region; it reads ERIAERMKALQELVPNANKTDKASMLDEIIDYVKFL.

Expressed in root epidermal cells.

The protein localises to the nucleus. In terms of biological role, transcription factor that regulates the development of root hairs. This is bHLH transcription factor RHL1 from Lotus japonicus (Lotus corniculatus var. japonicus).